We begin with the raw amino-acid sequence, 462 residues long: Bifunctional protein GlmU (462 aa).

The tract at residues 1 to 235 is pyrophosphorylase; the sequence is MSYINFSAII…TFEIMGVNSK (235 aa). UDP-N-acetyl-alpha-D-glucosamine is bound by residues 11–14, lysine 25, glutamine 80, 85–86, 107–109, glycine 144, glutamate 159, and asparagine 233; these read LAAG, GT, and YGD. Residue aspartate 109 coordinates Mg(2+). Mg(2+) is bound at residue asparagine 233. The linker stretch occupies residues 236 to 256; sequence SDFVDLDKQYQQRKVQCLLSS. Positions 257–462 are N-acetyltransferase; that stretch reads GLMIIDPNRF…LNWKRLKNKK (206 aa). Residues arginine 339 and lysine 357 each coordinate UDP-N-acetyl-alpha-D-glucosamine. Residue histidine 369 is the Proton acceptor of the active site. Tyrosine 372 and asparagine 383 together coordinate UDP-N-acetyl-alpha-D-glucosamine. Acetyl-CoA is bound by residues alanine 386, 392 to 393, alanine 429, and arginine 446; that span reads NY.

This sequence in the N-terminal section; belongs to the N-acetylglucosamine-1-phosphate uridyltransferase family. In the C-terminal section; belongs to the transferase hexapeptide repeat family. In terms of assembly, homotrimer. It depends on Mg(2+) as a cofactor.

The protein localises to the cytoplasm. It carries out the reaction alpha-D-glucosamine 1-phosphate + acetyl-CoA = N-acetyl-alpha-D-glucosamine 1-phosphate + CoA + H(+). The enzyme catalyses N-acetyl-alpha-D-glucosamine 1-phosphate + UTP + H(+) = UDP-N-acetyl-alpha-D-glucosamine + diphosphate. It functions in the pathway nucleotide-sugar biosynthesis; UDP-N-acetyl-alpha-D-glucosamine biosynthesis; N-acetyl-alpha-D-glucosamine 1-phosphate from alpha-D-glucosamine 6-phosphate (route II): step 2/2. Its pathway is nucleotide-sugar biosynthesis; UDP-N-acetyl-alpha-D-glucosamine biosynthesis; UDP-N-acetyl-alpha-D-glucosamine from N-acetyl-alpha-D-glucosamine 1-phosphate: step 1/1. It participates in bacterial outer membrane biogenesis; LPS lipid A biosynthesis. Its function is as follows. Catalyzes the last two sequential reactions in the de novo biosynthetic pathway for UDP-N-acetylglucosamine (UDP-GlcNAc). The C-terminal domain catalyzes the transfer of acetyl group from acetyl coenzyme A to glucosamine-1-phosphate (GlcN-1-P) to produce N-acetylglucosamine-1-phosphate (GlcNAc-1-P), which is converted into UDP-GlcNAc by the transfer of uridine 5-monophosphate (from uridine 5-triphosphate), a reaction catalyzed by the N-terminal domain. The chain is Bifunctional protein GlmU from Blochmanniella pennsylvanica (strain BPEN).